A 249-amino-acid polypeptide reads, in one-letter code: Zinc finger AN1 and C2H2 domain-containing stress-associated protein 13 (249 aa).

AN1-type zinc fingers lie at residues 7–55 (PDLG…RGDV) and 95–145 (AVKK…KPES). 16 residues coordinate Zn(2+): Cys-13, Cys-18, Cys-28, Cys-31, Cys-36, His-39, His-45, Cys-47, Cys-101, Cys-106, Cys-118, Cys-121, Cys-126, His-129, His-135, and Cys-137. The interval 194-213 (FASGNDGNSEKTQERNGKQN) is disordered. The span at 201–210 (NSEKTQERNG) shows a compositional bias: basic and acidic residues. Residues 220 to 243 (DVCPKCSRGFRDPVDLLKHIDKDH) form a C2H2-type zinc finger.

Functionally, may be involved in environmental stress response. The polypeptide is Zinc finger AN1 and C2H2 domain-containing stress-associated protein 13 (SAP13) (Arabidopsis thaliana (Mouse-ear cress)).